A 101-amino-acid polypeptide reads, in one-letter code: GKVYLVGGPELGGWKLQSDPRAYALWSARQQFKTTDVLWFNFTTGEDSVAEVWREEAYHACDIKDPIRLEPGGPDRFTLLTPGSHFICTKDQKFVACVPGR.

Positions 2–101 (KVYLVGGPEL…QKFVACVPGR (100 aa)) constitute a Phytocyanin domain. N-linked (GlcNAc...) asparagine glycosylation occurs at Asn-41. Cysteines 61 and 88 form a disulfide. Residue Ser-84 is glycosylated (O-linked (Hex) serine). A Cysteine derivative modification is found at Cys-97. At Arg-101 the chain carries Blocked carboxyl end (Arg).

Post-translationally, the identity of the saccharide is not reported. The sugar attached to Ser-84 is represented simply as Hex. Cys-97 sulfhydryl group is modified but does not form an interchain disulfide bond.

This chain is Pollen allergen Amb a 3, found in Ambrosia artemisiifolia var. elatior (Short ragweed).